Reading from the N-terminus, the 372-residue chain is MKYDLIIIGSGSVGAAAGYYATRAGLNVLMTDAHMPPHQHGSHHGDTRLIRHAYGEGEKYVPLVLRAQMLWDELSRHNEDDPIFVRSGVINLGPADSAFLANVAHSAEQWQLNVEKLDAQGIMARWPEIRVPDNYIGLFETDSGFLRSELAIKTWIQLAKEAGCAQLFNCPVTAIRHDDDGVTIETADGEYQAKKAIVCAGTWVKDLLPELPVLPVRKVFAWYQADGRYSVKNKFPAFTGELPNGDQYYGFPAENDALKIGKHNGGQVIHSADERVPFAEVVSDGSEAFPFLRNVLPGIGCCLYGAACTYDNSPDEDFIIDTLPGHDNTLLITGLSGHGFKFASVLGEIAADFAQDKKSDFDLTPFRLSRFQ.

FAD is bound at residue 4–34 (DLIIIGSGSVGAAAGYYATRAGLNVLMTDAH). Position 308 is an S-8alpha-FAD cysteine (Cys-308).

This sequence belongs to the MSOX/MTOX family. MTOX subfamily. In terms of assembly, monomer. The cofactor is FAD.

The enzyme catalyses N(alpha)-methyl-L-tryptophan + O2 + H2O = L-tryptophan + formaldehyde + H2O2. Catalyzes the oxidative demethylation of N-methyl-L-tryptophan. This chain is N-methyl-L-tryptophan oxidase, found in Escherichia coli O127:H6 (strain E2348/69 / EPEC).